The sequence spans 455 residues: Outer capsid protein sigma-1 (455 aa).

The tract at residues Met1 to Ile307 is tail. Positions Leu116–Thr148 form a coiled coil. N-linked (GlcNAc...) asparagine; by host glycans are attached at residues Asn231, Asn264, and Asn282. Residues Gly308–Thr455 form a head region.

The protein belongs to the orthoreovirus sigma-1 protein family. As to quaternary structure, homotrimer. Interacts (via the head region) with human F11R. Post-translationally, undergoes dramatic conformational rearrangements during viral disassembly in the endocytic pathway.

It localises to the virion. Its function is as follows. Fiber-like molecule that attaches the virion to the host cell membrane by binding to the primary receptor F11R/JAM-A and to sialic acid containing proteins (coreceptor). The interaction of sigma-1 with F11R is required for NF-kB activation and apoptosis. Binding to both sialic acid and F11R is required to induce maximal levels of apoptosis. The sequence is that of Outer capsid protein sigma-1 (S1) from Reovirus type 3 (strain Dearing) (T3D).